Here is a 374-residue protein sequence, read N- to C-terminus: Protein-glutamate methylesterase/protein-glutamine glutaminase 1 (374 aa).

One can recognise a Response regulatory domain in the interval 4–121; that stretch reads KVLVVDDSSF…ATNKDEAILL (118 aa). Aspartate 55 carries the post-translational modification 4-aspartylphosphate. Residues 141–170 form a disordered region; that stretch reads PSVAPVTPRPTTGSAVGNATTPVQSASAPV. The segment covering 149-167 has biased composition (polar residues); it reads RPTTGSAVGNATTPVQSAS. Positions 174–374 constitute a CheB-type methylesterase domain; it reads PLSSIRASGK…ESILKESARG (201 aa). Residues serine 193, histidine 220, and aspartate 316 contribute to the active site.

It belongs to the CheB family. Phosphorylated by CheA. Phosphorylation of the N-terminal regulatory domain activates the methylesterase activity.

The protein resides in the cytoplasm. The catalysed reaction is [protein]-L-glutamate 5-O-methyl ester + H2O = L-glutamyl-[protein] + methanol + H(+). It catalyses the reaction L-glutaminyl-[protein] + H2O = L-glutamyl-[protein] + NH4(+). Its function is as follows. Involved in chemotaxis. Part of a chemotaxis signal transduction system that modulates chemotaxis in response to various stimuli. Catalyzes the demethylation of specific methylglutamate residues introduced into the chemoreceptors (methyl-accepting chemotaxis proteins or MCP) by CheR. Also mediates the irreversible deamidation of specific glutamine residues to glutamic acid. The protein is Protein-glutamate methylesterase/protein-glutamine glutaminase 1 of Shewanella oneidensis (strain ATCC 700550 / JCM 31522 / CIP 106686 / LMG 19005 / NCIMB 14063 / MR-1).